Consider the following 132-residue polypeptide: Small ribosomal subunit protein uS8 (132 aa).

The protein belongs to the universal ribosomal protein uS8 family. As to quaternary structure, part of the 30S ribosomal subunit. Contacts proteins S5 and S12.

Its function is as follows. One of the primary rRNA binding proteins, it binds directly to 16S rRNA central domain where it helps coordinate assembly of the platform of the 30S subunit. This Kineococcus radiotolerans (strain ATCC BAA-149 / DSM 14245 / SRS30216) protein is Small ribosomal subunit protein uS8.